The following is a 439-amino-acid chain: IAA-amino acid hydrolase ILR1-like 2 (439 aa).

The first 21 residues, 1 to 21 (MALNKLLSLTFQLLLFLLSVS), serve as a signal peptide directing secretion. Positions 137, 139, 173, 197, and 397 each coordinate Mn(2+). The Prevents secretion from ER signature appears at 436 to 439 (HEEL).

Belongs to the peptidase M20 family. As to quaternary structure, monomer. Requires Mn(2+) as cofactor. Expressed in leaves, stems, siliques, seeds and flowers. Detected in the distal tips of cotyledons and seedling leaves, hydathodes of leaves from mature plants, pollen, ovules and developing seeds.

It is found in the endoplasmic reticulum lumen. Hydrolyzes certain amino acid conjugates of the plant growth regulator indole-3-acetic acid (IAA), including IAA-Ala, IAA-Leu, IAA-Met, IAA-Phe, IAA-Ser, IAA-Thr, IAA-Tyr and IAA-Val. Is the most efficient enzyme of the ILL family for IAA-Ala. Not important for IAA-Leu hydrolysis in roots. May act with ILR1 to provide free IAA to germinating seedlings. This is IAA-amino acid hydrolase ILR1-like 2 from Arabidopsis thaliana (Mouse-ear cress).